The primary structure comprises 245 residues: Probable transcriptional regulatory protein LVIS_1199 (245 aa).

The interval 1–23 (MSGHSKWHNIQGRKNAQDAKRGK) is disordered.

Belongs to the TACO1 family.

The protein resides in the cytoplasm. The sequence is that of Probable transcriptional regulatory protein LVIS_1199 from Levilactobacillus brevis (strain ATCC 367 / BCRC 12310 / CIP 105137 / JCM 1170 / LMG 11437 / NCIMB 947 / NCTC 947) (Lactobacillus brevis).